The following is a 217-amino-acid chain: Twisted gastrulation protein homolog 1-A (217 aa).

A signal peptide spans 1-26 (MRPALFLCPVLISVLFLLSSLSLISG). Residues Asn53 and Asn147 are each glycosylated (N-linked (GlcNAc...) asparagine).

It belongs to the twisted gastrulation protein family.

Its subcellular location is the secreted. In terms of biological role, involved in dorsal-ventral patterning. Appears to function predominantly as a ventralizing factor, through its actions as a BMP signaling agonist, acting through both chd-dependent and chd-independent mechanisms. May also antagonize BMP signaling, probably via formation of ternary complexes with chd and BMPs, resulting in dorsalization. This Danio rerio (Zebrafish) protein is Twisted gastrulation protein homolog 1-A (twsg1a).